The chain runs to 200 residues: Small ribosomal subunit protein uS4 (200 aa).

Positions threonine 22 to lysine 43 are disordered. An S4 RNA-binding domain is found at glutamine 92 to glutamate 170.

This sequence belongs to the universal ribosomal protein uS4 family. As to quaternary structure, part of the 30S ribosomal subunit. Contacts protein S5. The interaction surface between S4 and S5 is involved in control of translational fidelity.

Its function is as follows. One of the primary rRNA binding proteins, it binds directly to 16S rRNA where it nucleates assembly of the body of the 30S subunit. In terms of biological role, with S5 and S12 plays an important role in translational accuracy. This chain is Small ribosomal subunit protein uS4, found in Listeria monocytogenes serotype 4a (strain HCC23).